Here is an 88-residue protein sequence, read N- to C-terminus: Transmembrane protein 069R (88 aa).

2 helical membrane passes run 30-50 and 67-87; these read ALWP…VFTA and VGVF…GDSF.

The protein localises to the host membrane. The chain is Transmembrane protein 069R from Frog virus 3 (isolate Goorha) (FV-3).